The primary structure comprises 253 residues: Geranylgeranylglyceryl phosphate synthase (253 aa).

Residues D23 and S52 each contribute to the Mg(2+) site. Residues 171–177 (YFEAGSG), 202–203 (GG), and 224–225 (GT) contribute to the sn-glycerol 1-phosphate site.

The protein belongs to the GGGP/HepGP synthase family. Group II subfamily. Homodimer. Requires Mg(2+) as cofactor.

Its subcellular location is the cytoplasm. It catalyses the reaction sn-glycerol 1-phosphate + (2E,6E,10E)-geranylgeranyl diphosphate = sn-3-O-(geranylgeranyl)glycerol 1-phosphate + diphosphate. The protein operates within membrane lipid metabolism; glycerophospholipid metabolism. With respect to regulation, inhibited by high concentrations of magnesium (&gt;10 mM) and by EDTA in vitro. Prenyltransferase that catalyzes the transfer of the geranylgeranyl moiety of geranylgeranyl diphosphate (GGPP) to the C3 hydroxyl of sn-glycerol-1-phosphate (G1P). This reaction is the first ether-bond-formation step in the biosynthesis of archaeal membrane lipids. Cannot use sn-glycerol-3-phosphate (G3P) as substrate. In Thermoplasma acidophilum (strain ATCC 25905 / DSM 1728 / JCM 9062 / NBRC 15155 / AMRC-C165), this protein is Geranylgeranylglyceryl phosphate synthase.